The primary structure comprises 182 residues: Lipoprotein signal peptidase (182 aa).

3 helical membrane passes run 21 to 41 (LLLS…VLAV), 74 to 94 (GYTW…FWMG), and 98 to 118 (VSPW…GNLV). Residues D134 and D148 contribute to the active site. The chain crosses the membrane as a helical span at residues 146–166 (VADPSVVGGAILLVVLSIFGY).

It belongs to the peptidase A8 family.

It localises to the cell membrane. It carries out the reaction Release of signal peptides from bacterial membrane prolipoproteins. Hydrolyzes -Xaa-Yaa-Zaa-|-(S,diacylglyceryl)Cys-, in which Xaa is hydrophobic (preferably Leu), and Yaa (Ala or Ser) and Zaa (Gly or Ala) have small, neutral side chains.. It functions in the pathway protein modification; lipoprotein biosynthesis (signal peptide cleavage). Its function is as follows. This protein specifically catalyzes the removal of signal peptides from prolipoproteins. This chain is Lipoprotein signal peptidase, found in Mycobacterium avium (strain 104).